Here is a 299-residue protein sequence, read N- to C-terminus: Acetaldehyde dehydrogenase 6 (299 aa).

Catalysis depends on C125, which acts as the Acyl-thioester intermediate. Residues 156–164 (GAGPGTRAN) and N275 each bind NAD(+).

It belongs to the acetaldehyde dehydrogenase family.

It carries out the reaction acetaldehyde + NAD(+) + CoA = acetyl-CoA + NADH + H(+). This is Acetaldehyde dehydrogenase 6 (hpdG) from Rhodococcus jostii (strain RHA1).